A 365-amino-acid polypeptide reads, in one-letter code: tRNA/tmRNA (uracil-C(5))-methyltransferase (365 aa).

The S-adenosyl-L-methionine site is built by glutamine 189, tyrosine 217, asparagine 222, glutamate 238, and aspartate 298. Cysteine 323 (nucleophile) is an active-site residue. Residue glutamate 357 is the Proton acceptor of the active site.

It belongs to the class I-like SAM-binding methyltransferase superfamily. RNA M5U methyltransferase family. TrmA subfamily.

It carries out the reaction uridine(54) in tRNA + S-adenosyl-L-methionine = 5-methyluridine(54) in tRNA + S-adenosyl-L-homocysteine + H(+). It catalyses the reaction uridine(341) in tmRNA + S-adenosyl-L-methionine = 5-methyluridine(341) in tmRNA + S-adenosyl-L-homocysteine + H(+). In terms of biological role, dual-specificity methyltransferase that catalyzes the formation of 5-methyluridine at position 54 (m5U54) in all tRNAs, and that of position 341 (m5U341) in tmRNA (transfer-mRNA). The protein is tRNA/tmRNA (uracil-C(5))-methyltransferase of Shewanella baltica (strain OS185).